Consider the following 126-residue polypeptide: Type II methyltransferase M.HgiGI (126 aa).

One can recognise an SAM-dependent MTase C5-type domain in the interval 1-126 (MKTIDLFAGC…ARLSKIHQQA (126 aa)). C75 is an active-site residue.

This sequence belongs to the class I-like SAM-binding methyltransferase superfamily. C5-methyltransferase family.

The catalysed reaction is a 2'-deoxycytidine in DNA + S-adenosyl-L-methionine = a 5-methyl-2'-deoxycytidine in DNA + S-adenosyl-L-homocysteine + H(+). Its function is as follows. A methylase, recognizes the double-stranded sequence 5'-GRCGYC-3', methylates C-? on both strands, and protects the DNA from cleavage by the HgiEI endonuclease. The polypeptide is Type II methyltransferase M.HgiGI (Herpetosiphon aurantiacus (Herpetosiphon giganteus)).